An 867-amino-acid polypeptide reads, in one-letter code: MQDTYQPAQIEAAIQQQWANEERFKAVVNPQKEKFYCLSMFPYPSGKLHMGHVRNYTIGDVISRYQRMLGKNVLQPMGWDAFGMPAENAAMKNQVAPAQWTYQNIAEMKKQLQSLGFAIDWSREITTCRPDYYRWEQWLFTRLYQKGVIYRKLGAVNWDPVDQTVLANEQVIDGRGWRSGAIVEKREIPMYYFRITDYAEELLNDLEQLDGWPERVKMMQRNWIGKSRGMTIRFPIEPESQKGLSAENAQFLQIYTTRPDTIFGVTFLAVAAEHPLALAAAEDNPALRQFMTECKTGSVAEADLATMPKKGMATGRFVTHPLTGKRLPVWVGNYVLSGYGDAAVMGVPAHDERDFHFAHQYGLPIVQVIQTEKDLPAFNADSWQEWYGDKEEMHVIASDDCNGLNYDQAFEKLSEKLAALNLGEPKTQYRLRDWGISRQRYWGCPIPIIHHDDGEALADTLPVVLPEDKIPDGGGSVLAQSPDYYECRFQGKAARRETDTMDTFVESSWYQFRYMSPHYQKGMLDPEEVAYWQDVDQYIGGIEHAILHLLYARFFTKLLRDEGLVHTDEPFKKLLTQGMVLAGTWYREQEHGSKIWFNPADVQVKTDDKGRIIGGVLLSDGKPVQYGGMEKMSKSKNNGVDPQALIKTYGADTARLYTMFTAPPEASLEWSESGVEGAYRFLRRLWAYCYEFRHSIAKPSEVVPLNEKHQNIRREIHEQLRAARFDYERNQFNTVVSAGMKLFNCLNEIEPDYDALRREGVRILLLILSPIVPHITETLWQALDFSGVISDQALPEVDETALKQDNMTLVVQINGKRRGEISVATDAAQQNIIDCALADERFAPYLAGLTVQKTIYVPKKLVNIVAK.

Positions 42–52 (PYPSGKLHMGH) match the 'HIGH' region motif. Residues 631–635 (KMSKS) carry the 'KMSKS' region motif. Residue lysine 634 participates in ATP binding.

This sequence belongs to the class-I aminoacyl-tRNA synthetase family.

It localises to the cytoplasm. The enzyme catalyses tRNA(Leu) + L-leucine + ATP = L-leucyl-tRNA(Leu) + AMP + diphosphate. In Dichelobacter nodosus (strain VCS1703A), this protein is Leucine--tRNA ligase.